The following is a 208-amino-acid chain: 3-demethoxyubiquinol 3-hydroxylase (208 aa).

Fe cation contacts are provided by E57, E87, H90, E139, E171, and H174.

This sequence belongs to the COQ7 family. It depends on Fe cation as a cofactor.

It is found in the cell membrane. It catalyses the reaction a 5-methoxy-2-methyl-3-(all-trans-polyprenyl)benzene-1,4-diol + AH2 + O2 = a 3-demethylubiquinol + A + H2O. The protein operates within cofactor biosynthesis; ubiquinone biosynthesis. Its function is as follows. Catalyzes the hydroxylation of 2-nonaprenyl-3-methyl-6-methoxy-1,4-benzoquinol during ubiquinone biosynthesis. This Nitrosomonas europaea (strain ATCC 19718 / CIP 103999 / KCTC 2705 / NBRC 14298) protein is 3-demethoxyubiquinol 3-hydroxylase.